The primary structure comprises 335 residues: Glycerol-3-phosphate dehydrogenase [NAD(P)+] (335 aa).

NADPH contacts are provided by W11, R30, and K106. Sn-glycerol 3-phosphate contacts are provided by K106, G135, and S137. A139 provides a ligand contact to NADPH. K190, D243, S253, R254, and N255 together coordinate sn-glycerol 3-phosphate. Residue K190 is the Proton acceptor of the active site. R254 contributes to the NADPH binding site. NADPH-binding residues include V278 and E280.

It belongs to the NAD-dependent glycerol-3-phosphate dehydrogenase family.

Its subcellular location is the cytoplasm. It catalyses the reaction sn-glycerol 3-phosphate + NAD(+) = dihydroxyacetone phosphate + NADH + H(+). It carries out the reaction sn-glycerol 3-phosphate + NADP(+) = dihydroxyacetone phosphate + NADPH + H(+). It participates in membrane lipid metabolism; glycerophospholipid metabolism. Catalyzes the reduction of the glycolytic intermediate dihydroxyacetone phosphate (DHAP) to sn-glycerol 3-phosphate (G3P), the key precursor for phospholipid synthesis. The chain is Glycerol-3-phosphate dehydrogenase [NAD(P)+] from Paucimonas lemoignei (Pseudomonas lemoignei).